Consider the following 133-residue polypeptide: UPF0292 protein TK1411 (133 aa).

In terms of domain architecture, Toprim spans 20 to 100 (EGALIVEGLR…SVDIETWKEL (81 aa)). The Mg(2+) site is built by Glu-26, Asp-69, and Asp-71.

Belongs to the UPF0292 family. It depends on Mg(2+) as a cofactor.

This Thermococcus kodakarensis (strain ATCC BAA-918 / JCM 12380 / KOD1) (Pyrococcus kodakaraensis (strain KOD1)) protein is UPF0292 protein TK1411.